An 87-amino-acid chain; its full sequence is NADH-ubiquinone oxidoreductase chain 4L (87 aa).

A run of 3 helical transmembrane segments spans residues 1-21, 22-42, and 57-77; these read MNLS…NRKN, IILM…LVLI, and LYII…LVAF.

This sequence belongs to the complex I subunit 4L family. In terms of assembly, core subunit of respiratory chain NADH dehydrogenase (Complex I) which is composed of 45 different subunits.

Its subcellular location is the mitochondrion inner membrane. It catalyses the reaction a ubiquinone + NADH + 5 H(+)(in) = a ubiquinol + NAD(+) + 4 H(+)(out). Core subunit of the mitochondrial membrane respiratory chain NADH dehydrogenase (Complex I) which catalyzes electron transfer from NADH through the respiratory chain, using ubiquinone as an electron acceptor. The protein is NADH-ubiquinone oxidoreductase chain 4L (ND4L) of Moniliophthora perniciosa (strain FA553 / isolate CP02) (Witches'-broom disease fungus).